Reading from the N-terminus, the 409-residue chain is E3 ubiquitin-protein ligase MARCHF4 (409 aa).

Positions 1–17 (MLMPLGGLLWWWCCCCG) are cleaved as a signal peptide. Residues 92 to 133 (GPREAVGRETPPLPPPPPLPPSGDDDWDGPATGPPASLLSSA) form a disordered region. The span at 102–112 (PPLPPPPPLPP) shows a compositional bias: pro residues. The segment at 154–214 (DSGMRTPLCR…ELCYYKYHVI (61 aa)) adopts an RING-CH-type zinc-finger fold. 8 residues coordinate Zn(2+): C162, C165, C178, C180, H188, C191, C204, and C207. 2 helical membrane-spanning segments follow: residues 242–262 (LGSL…FSPS) and 271–291 (LFQI…GLII). Disordered regions lie at residues 323–372 (EDQK…GPVS) and 389–409 (PHDQ…VTTV). A compositionally biased stretch (polar residues) spans 328 to 343 (GGRTNLQTSSSAQANL).

The protein localises to the golgi apparatus membrane. It carries out the reaction S-ubiquitinyl-[E2 ubiquitin-conjugating enzyme]-L-cysteine + [acceptor protein]-L-lysine = [E2 ubiquitin-conjugating enzyme]-L-cysteine + N(6)-ubiquitinyl-[acceptor protein]-L-lysine.. It functions in the pathway protein modification; protein ubiquitination. E3 ubiquitin-protein ligase that may mediate ubiquitination of MHC-I and CD4, and promote their subsequent endocytosis and sorting to lysosomes via multivesicular bodies. E3 ubiquitin ligases accept ubiquitin from an E2 ubiquitin-conjugating enzyme in the form of a thioester and then directly transfer the ubiquitin to targeted substrates. This Mus musculus (Mouse) protein is E3 ubiquitin-protein ligase MARCHF4 (Marchf4).